The sequence spans 616 residues: Chaperone protein HtpG (616 aa).

Residues 1 to 333 (MKKQFDTEVN…CQDLPLNVSR (333 aa)) are a; substrate-binding. The tract at residues 334 to 542 (EILQQNKILS…SNDPTYQMQK (209 aa)) is b. Positions 543–616 (IMLSMGQEVK…INEFLEKELL (74 aa)) are c.

It belongs to the heat shock protein 90 family. Homodimer.

It is found in the cytoplasm. Its function is as follows. Molecular chaperone. Has ATPase activity. The chain is Chaperone protein HtpG from Borrelia garinii subsp. bavariensis (strain ATCC BAA-2496 / DSM 23469 / PBi) (Borreliella bavariensis).